The following is a 385-amino-acid chain: Uroporphyrinogen decarboxylase (385 aa).

Substrate contacts are provided by residues 53-57 (RQAGR), aspartate 102, tyrosine 179, serine 234, and histidine 363.

This sequence belongs to the uroporphyrinogen decarboxylase family. Homodimer.

It is found in the cytoplasm. It carries out the reaction uroporphyrinogen III + 4 H(+) = coproporphyrinogen III + 4 CO2. The protein operates within porphyrin-containing compound metabolism; protoporphyrin-IX biosynthesis; coproporphyrinogen-III from 5-aminolevulinate: step 4/4. Functionally, catalyzes the decarboxylation of four acetate groups of uroporphyrinogen-III to yield coproporphyrinogen-III. The protein is Uroporphyrinogen decarboxylase of Tropheryma whipplei (strain TW08/27) (Whipple's bacillus).